The following is a 59-amino-acid chain: Chromatin protein Cren7 (59 aa).

It belongs to the Cren7 family. In terms of assembly, monomer. Methylated at multiple sites, to varying extents.

It is found in the chromosome. The protein resides in the cytoplasm. Functionally, a chromatin protein, binds double-stranded DNA without sequence specificity. Constrains negative DNA supercoils. In Sulfolobus acidocaldarius (strain ATCC 33909 / DSM 639 / JCM 8929 / NBRC 15157 / NCIMB 11770), this protein is Chromatin protein Cren7.